Reading from the N-terminus, the 43-residue chain is Histone H3 (43 aa).

As to quaternary structure, the nucleosome is a histone octamer containing two molecules each of H2A, H2B, H3 and H4 assembled in one H3-H4 heterotetramer and two H2A-H2B heterodimers. The octamer wraps approximately 147 bp of DNA.

The protein resides in the nucleus. It is found in the chromosome. In terms of biological role, core component of nucleosome. Nucleosomes wrap and compact DNA into chromatin, limiting DNA accessibility to the cellular machineries which require DNA as a template. Histones thereby play a central role in transcription regulation, DNA repair, DNA replication and chromosomal stability. DNA accessibility is regulated via a complex set of post-translational modifications of histones, also called histone code, and nucleosome remodeling. This Penaeus vannamei (Whiteleg shrimp) protein is Histone H3.